We begin with the raw amino-acid sequence, 179 residues long: Large ribosomal subunit protein uL6 (179 aa).

Belongs to the universal ribosomal protein uL6 family. In terms of assembly, part of the 50S ribosomal subunit.

In terms of biological role, this protein binds to the 23S rRNA, and is important in its secondary structure. It is located near the subunit interface in the base of the L7/L12 stalk, and near the tRNA binding site of the peptidyltransferase center. The chain is Large ribosomal subunit protein uL6 from Geobacter metallireducens (strain ATCC 53774 / DSM 7210 / GS-15).